We begin with the raw amino-acid sequence, 463 residues long: Chromosomal replication initiator protein DnaA (463 aa).

The domain I, interacts with DnaA modulators stretch occupies residues 1-83 (MSLSLWQQCL…LRFEVGSKPI (83 aa)). Positions 83–126 (IVPVAVSSAASSGASVPPAAVRASSLARPSWERVTAQPELSYRS) are domain II. The domain III, AAA+ region stretch occupies residues 127-343 (NVNPKHTFDN…GALNRVIANA (217 aa)). Positions 171, 173, 174, and 175 each coordinate ATP. Residues 344–463 (NFTGRAITID…FSNLIRTLSS (120 aa)) form a domain IV, binds dsDNA region.

Belongs to the DnaA family. Oligomerizes as a right-handed, spiral filament on DNA at oriC.

The protein localises to the cytoplasm. In terms of biological role, plays an essential role in the initiation and regulation of chromosomal replication. ATP-DnaA binds to the origin of replication (oriC) to initiate formation of the DNA replication initiation complex once per cell cycle. Binds the DnaA box (a 9 base pair repeat at the origin) and separates the double-stranded (ds)DNA. Forms a right-handed helical filament on oriC DNA; dsDNA binds to the exterior of the filament while single-stranded (ss)DNA is stabiized in the filament's interior. The ATP-DnaA-oriC complex binds and stabilizes one strand of the AT-rich DNA unwinding element (DUE), permitting loading of DNA polymerase. After initiation quickly degrades to an ADP-DnaA complex that is not apt for DNA replication. Binds acidic phospholipids. This Edwardsiella ictaluri (strain 93-146) protein is Chromosomal replication initiator protein DnaA.